Here is a 582-residue protein sequence, read N- to C-terminus: Protein LYRIC (582 aa).

Topologically, residues 1-48 (MAARSWQDELAQQAEEGSARLREMLSVGLGFLRTELGLDLGLEPKRYP) are lumenal. The activation of NF-kappa-B stretch occupies residues 1 to 71 (MAARSWQDEL…LLLFLLGYGW (71 aa)). Residues 49 to 69 (GWVILVGTGALGLLLLFLLGY) traverse the membrane as a helical segment. Residues 70–582 (GWAAACAGAR…KKKKKARRET (513 aa)) lie on the Cytoplasmic side of the membrane. The interaction with BCCIP stretch occupies residues 72–169 (AAACAGARKK…EKSKKNKKKS (98 aa)). The segment at 78–222 (ARKKRRSPPR…DSGSLDSTIP (145 aa)) is disordered. Low complexity predominate over residues 93-106 (AAVPAAAPDDLALL). Residues 101–205 (DDLALLKNLR…ISHREKRQQR (105 aa)) form an interaction with RELA region. The span at 109-127 (LRSEEQKKKNRKKLSEKPK) shows a compositional bias: basic and acidic residues. A Phosphothreonine modification is found at threonine 143. The span at 160-169 (EKSKKNKKKS) shows a compositional bias: basic residues. Serine 180 is modified (phosphoserine). Positions 198–208 (HREKRQQRKRD) are enriched in basic residues. A phosphoserine mark is found at serine 216 and serine 251. Lysine 264 bears the N6-acetyllysine mark. The tract at residues 280-582 (TVNGGGWNEK…KKKKKARRET (303 aa)) is disordered. 8 positions are modified to phosphoserine: serine 298, serine 306, serine 308, serine 311, serine 323, serine 339, serine 344, and serine 369. Residues 320 to 333 (SAWSQDTGDANTNG) are compositionally biased toward polar residues. 2 stretches are compositionally biased toward polar residues: residues 354-372 (EPVS…SRNQ) and 383-394 (NGLSSADPNSDW). The interval 381 to 443 (GLNGLSSADP…EGALPTGKSK (63 aa)) is lung-homing for mammary tumors. Serine 415 and serine 426 each carry phosphoserine. Positions 421-434 (DDQKVSDDDKEKGE) are enriched in basic and acidic residues. A compositionally biased stretch (basic residues) spans 441 to 451 (KSKKKKKKKKK). A Phosphoserine modification is found at serine 457. Phosphothreonine is present on threonine 458. A phosphoserine mark is found at serine 478, serine 494, and serine 496. Composition is skewed to polar residues over residues 504-520 (KNSQ…STEP) and 549-568 (NTKQ…SWES). A Phosphoserine modification is found at serine 568. Residues 571–582 (QIKKKKKARRET) are compositionally biased toward basic residues.

Interacts with BCCIP, CREBBP/CBP and RELA/p65. Widely expressed with highest levels in muscle-dominating organs such as skeletal muscle, heart, tongue and small intestine and in endocrine glands such as thyroid and adrenal gland. Overexpressed in various cancers including breast, brain, prostate, melanoma and glioblastoma multiforme.

It localises to the endoplasmic reticulum membrane. Its subcellular location is the nucleus membrane. It is found in the cell junction. The protein localises to the tight junction. The protein resides in the nucleus. It localises to the nucleolus. Its subcellular location is the cytoplasm. It is found in the perinuclear region. Its function is as follows. Down-regulates SLC1A2/EAAT2 promoter activity when expressed ectopically. Activates the nuclear factor kappa-B (NF-kappa-B) transcription factor. Promotes anchorage-independent growth of immortalized melanocytes and astrocytes which is a key component in tumor cell expansion. Promotes lung metastasis and also has an effect on bone and brain metastasis, possibly by enhancing the seeding of tumor cells to the target organ endothelium. Induces chemoresistance. This Homo sapiens (Human) protein is Protein LYRIC (MTDH).